The primary structure comprises 407 residues: Putative nickel insertion protein (407 aa).

It belongs to the LarC family.

The sequence is that of Putative nickel insertion protein from Gloeothece citriformis (strain PCC 7424) (Cyanothece sp. (strain PCC 7424)).